We begin with the raw amino-acid sequence, 436 residues long: UPF0761 membrane protein Bxeno_A3061 (436 aa).

The next 6 helical transmembrane spans lie at 42 to 62 (LVPLATVAFALFTAFPIFASF), 96 to 116 (GLTTIGMIFLFVTAVMTMMTV), 136 to 156 (ILVYWAIITLGPILIGVSLSI), 180 to 200 (ALAGAALPLTAAAFTILYVYL), 210 to 230 (AVIGGVTAAIAFELAKRGFGY), and 241 to 261 (VYGAFAAVPLFLLWMYLCWFI).

The protein belongs to the UPF0761 family.

The protein localises to the cell inner membrane. This Paraburkholderia xenovorans (strain LB400) protein is UPF0761 membrane protein Bxeno_A3061.